The sequence spans 151 residues: Ribosomal RNA large subunit methyltransferase H (151 aa).

S-adenosyl-L-methionine contacts are provided by residues L70, G99, and 118 to 123 (LSKLTF).

Belongs to the RNA methyltransferase RlmH family. Homodimer.

The protein resides in the cytoplasm. It catalyses the reaction pseudouridine(1915) in 23S rRNA + S-adenosyl-L-methionine = N(3)-methylpseudouridine(1915) in 23S rRNA + S-adenosyl-L-homocysteine + H(+). Its function is as follows. Specifically methylates the pseudouridine at position 1915 (m3Psi1915) in 23S rRNA. This chain is Ribosomal RNA large subunit methyltransferase H, found in Gloeobacter violaceus (strain ATCC 29082 / PCC 7421).